The primary structure comprises 182 residues: Peptidyl-prolyl cis-trans isomerase C, mitochondrial (182 aa).

The N-terminal 20 residues, 1-20 (MFKRSIIQQSRLFSNSASRL), are a transit peptide targeting the mitochondrion. Residues 25–181 (FFDPAVNGTK…AEIVIEEAGE (157 aa)) form the PPIase cyclophilin-type domain.

This sequence belongs to the cyclophilin-type PPIase family.

The protein resides in the mitochondrion matrix. It carries out the reaction [protein]-peptidylproline (omega=180) = [protein]-peptidylproline (omega=0). With respect to regulation, inhibited by the immunosuppressant drug cyclosporin A and by SDZ NIM811, a PPIase inhibitor. Functionally, PPIases accelerate the folding of proteins. It catalyzes the cis-trans isomerization of proline imidic peptide bonds in oligopeptides. This isozyme is required for growth on lactate at high temperature. This Saccharomyces cerevisiae (strain ATCC 204508 / S288c) (Baker's yeast) protein is Peptidyl-prolyl cis-trans isomerase C, mitochondrial (CPR3).